Consider the following 273-residue polypeptide: Glutamate 5-kinase (273 aa).

Lys15 contributes to the ATP binding site. 3 residues coordinate substrate: Ser55, Asp142, and Asn158. Residues 178–179 (SD) and 220–226 (TGGMLSK) each bind ATP.

Belongs to the glutamate 5-kinase family.

The protein localises to the cytoplasm. The catalysed reaction is L-glutamate + ATP = L-glutamyl 5-phosphate + ADP. The protein operates within amino-acid biosynthesis; L-proline biosynthesis; L-glutamate 5-semialdehyde from L-glutamate: step 1/2. Functionally, catalyzes the transfer of a phosphate group to glutamate to form L-glutamate 5-phosphate. The protein is Glutamate 5-kinase of Streptococcus pyogenes serotype M4 (strain MGAS10750).